We begin with the raw amino-acid sequence, 148 residues long: MRWRITDAKDYLQAKDYIDTAVIPLINIRVNNHFKMAAEKGEFTQLLSEELERQLKGRVYLLPPYTYVDRNEITVQGLKDLREELITEFPHVVLLTSDESWRAEDALGKMIVTSSVPLEHLNDSLKRKILDERTAEILNVLLQLWSTL.

This is an uncharacterized protein from Bacillus subtilis (strain 168).